The following is a 63-amino-acid chain: ATP synthase F(0) complex subunit 8 (63 aa).

The chain crosses the membrane as a helical span at residues 8–24; the sequence is MWLLTILSMLLTLFVLF. K57 bears the N6-acetyllysine mark.

This sequence belongs to the ATPase protein 8 family. As to quaternary structure, component of the ATP synthase complex composed at least of ATP5F1A/subunit alpha, ATP5F1B/subunit beta, ATP5MC1/subunit c (homooctomer), MT-ATP6/subunit a, MT-ATP8/subunit 8, ATP5ME/subunit e, ATP5MF/subunit f, ATP5MG/subunit g, ATP5MK/subunit k, ATP5MJ/subunit j, ATP5F1C/subunit gamma, ATP5F1D/subunit delta, ATP5F1E/subunit epsilon, ATP5PF/subunit F6, ATP5PB/subunit b, ATP5PD/subunit d, ATP5PO/subunit OSCP. ATP synthase complex consists of a soluble F(1) head domain (subunits alpha(3) and beta(3)) - the catalytic core - and a membrane F(0) domain - the membrane proton channel (subunits c, a, 8, e, f, g, k and j). These two domains are linked by a central stalk (subunits gamma, delta, and epsilon) rotating inside the F1 region and a stationary peripheral stalk (subunits F6, b, d, and OSCP). Interacts with PRICKLE3.

It is found in the mitochondrion membrane. Subunit 8, of the mitochondrial membrane ATP synthase complex (F(1)F(0) ATP synthase or Complex V) that produces ATP from ADP in the presence of a proton gradient across the membrane which is generated by electron transport complexes of the respiratory chain. ATP synthase complex consist of a soluble F(1) head domain - the catalytic core - and a membrane F(1) domain - the membrane proton channel. These two domains are linked by a central stalk rotating inside the F(1) region and a stationary peripheral stalk. During catalysis, ATP synthesis in the catalytic domain of F(1) is coupled via a rotary mechanism of the central stalk subunits to proton translocation. In vivo, can only synthesize ATP although its ATP hydrolase activity can be activated artificially in vitro. Part of the complex F(0) domain. The protein is ATP synthase F(0) complex subunit 8 of Balaenoptera physalus (Fin whale).